Consider the following 165-residue polypeptide: Serine/threonine-protein phosphatase 2A 56 kDa regulatory subunit epsilon isoform (165 aa).

The tract at residues 1–41 is disordered; it reads MSSAPTTPPSVDKVDGFSRKSVRKARQKRSQSSSQFRSQGK. S2 carries the post-translational modification N-acetylserine. Residue T7 is modified to Phosphothreonine. The segment covering 20-29 has biased composition (basic residues); that stretch reads KSVRKARQKR. Residues S30, S32, and S34 each carry the phosphoserine modification. Positions 30–41 are enriched in low complexity; that stretch reads SQSSSQFRSQGK.

It belongs to the phosphatase 2A regulatory subunit B56 family. In terms of assembly, PP2A consists of a common heterodimeric core enzyme, composed of a 36 kDa catalytic subunit (subunit C) and a 65 kDa constant regulatory subunit (PR65 or subunit A), that associates with a variety of regulatory subunits. Proteins that associate with the core dimer include three families of regulatory subunits B (the R2/B/PR55/B55, R3/B''/PR72/PR130/PR59 and R5/B'/B56 families), the 48 kDa variable regulatory subunit, viral proteins, and cell signaling molecules. Interacts with SGO1. Found in a complex with at least ARL2, PPP2CB; PPP2R1A, PPP2R2A, PPP2R5E and TBCD. As to expression, highly expressed in testis, lung and brain.

Its subcellular location is the cytoplasm. Its function is as follows. The B regulatory subunit might modulate substrate selectivity and catalytic activity, and might also direct the localization of the catalytic enzyme to a particular subcellular compartment. The protein is Serine/threonine-protein phosphatase 2A 56 kDa regulatory subunit epsilon isoform (PPP2R5E) of Oryctolagus cuniculus (Rabbit).